The chain runs to 260 residues: Glutathione S-transferase domain-containing protein DDB_G0280881 (260 aa).

In terms of domain architecture, GST N-terminal spans 7–96 (KVDFIFYTNG…YLAQKYNTFL (90 aa)). Residues 102–228 (NPKENSDVIT…QQISEGFKNF (127 aa)) enclose the GST C-terminal domain.

It belongs to the GST superfamily.

The sequence is that of Glutathione S-transferase domain-containing protein DDB_G0280881 from Dictyostelium discoideum (Social amoeba).